A 220-amino-acid chain; its full sequence is Protein myomaker (220 aa).

Residue Met1 is a topological domain, extracellular. A helical membrane pass occupies residues 2 to 22 (GAFIAKMLLPTISSLVFVPAA). Over 23 to 37 (SVAAKRGFHMEAMVY) the chain is Cytoplasmic. The chain crosses the membrane as a helical span at residues 38 to 58 (FFTMFFTAIYHACDGPGLSIL). The Extracellular segment spans residues 59–64 (CFMKYD). A helical transmembrane segment spans residues 65–85 (ILEYFSVYGTAISMWVTLLAL). Residues 86–93 (GDFDEPKR) lie on the Cytoplasmic side of the membrane. Residues 94-110 (SSLTMFGVLTAAVRIYQ) traverse the membrane as a helical segment. Over 111-112 (DR) the chain is Extracellular. A helical transmembrane segment spans residues 113 to 133 (LGYGIYSGPIGTAVFMITVKW). The Cytoplasmic segment spans residues 134 to 153 (LQKMKEKKGLYPDKSVYTQQ). A helical membrane pass occupies residues 154–174 (VGPGCCFGALALMLRFYFEEW). Residue Asp175 is a topological domain, extracellular. A helical transmembrane segment spans residues 176 to 196 (YAYVHSFYHVSLAMSFILLLP). Over 197 to 220 (KKNRYAGTGRNAAKLNCYTLCCCV) the chain is Cytoplasmic.

This sequence belongs to the TMEM8 family.

The protein resides in the cell membrane. Myoblast-specific protein that mediates myoblast fusion, an essential step for the formation of multi-nucleated muscle fibers. Actively participates in the membrane fusion reaction by mediating the mixing of cell membrane lipids (hemifusion) upstream of mymx. The sequence is that of Protein myomaker from Danio rerio (Zebrafish).